The following is a 116-amino-acid chain: Large ribosomal subunit protein bL19 (116 aa).

Belongs to the bacterial ribosomal protein bL19 family.

This protein is located at the 30S-50S ribosomal subunit interface and may play a role in the structure and function of the aminoacyl-tRNA binding site. In Streptomyces avermitilis (strain ATCC 31267 / DSM 46492 / JCM 5070 / NBRC 14893 / NCIMB 12804 / NRRL 8165 / MA-4680), this protein is Large ribosomal subunit protein bL19.